Consider the following 592-residue polypeptide: Hepatocyte nuclear factor 1-alpha-B (592 aa).

A dimerization region spans residues 1-31; that stretch reads MASQLSYLQQELLRALLESGVTKEALKKALA. The region spanning 1–32 is the HNF-p1 domain; it reads MASQLSYLQQELLRALLESGVTKEALKKALAD. Residues 54–78 form a disordered region; the sequence is NCVQLPNGLGEPQMSEDESSDDGGD. Acidic residues predominate over residues 67-77; it reads MSEDESSDDGG. One can recognise a POU-specific atypical domain in the interval 85-180; the sequence is KELERLSPEE…IARQFTHAGH (96 aa). Interaction with DNA regions lie at residues 128–130, 141–147, 153–156, 201–204, 261–263, and 268–271; these read QRE, HLSQHLN, KTQK, RFKW, RVY, and NSGK. Residues 195–203 carry the Nuclear localization signal motif; it reads KKMRRNRFK. A DNA-binding region (homeobox; HNF1-type) is located at residues 197–277; the sequence is MRRNRFKWGP…NSGKEEAFRH (81 aa). Polar residues-rich tracts occupy residues 284 to 295 and 306 to 328; these read YNGQQSSAQPLS and RYTQ…TLSP. 2 disordered regions span residues 284-329 and 511-533; these read YNGQ…LSPS and KQVV…HNQD.

It belongs to the HNF1 homeobox family. In terms of assembly, binds DNA as dimer. Forms a homodimer or heterodimer with HNF1-alpha-A. Potentially also form a heterodimer with HNF1-beta. As to expression, liver.

It is found in the nucleus. Its function is as follows. Transcriptional activator that regulates the tissue specific expression of multiple genes, especially in pancreas and liver. Binds to the hepatocyte specific promoter element HP1. Binds to the inverted palindrome 5'-GTTAATNATTAAC-3'. This is Hepatocyte nuclear factor 1-alpha-B (hnf1a-b) from Xenopus laevis (African clawed frog).